The primary structure comprises 509 residues: ATP synthase subunit alpha (509 aa).

169-176 (GDRQTGKT) serves as a coordination point for ATP.

It belongs to the ATPase alpha/beta chains family. As to quaternary structure, F-type ATPases have 2 components, CF(1) - the catalytic core - and CF(0) - the membrane proton channel. CF(1) has five subunits: alpha(3), beta(3), gamma(1), delta(1), epsilon(1). CF(0) has three main subunits: a(1), b(2) and c(9-12). The alpha and beta chains form an alternating ring which encloses part of the gamma chain. CF(1) is attached to CF(0) by a central stalk formed by the gamma and epsilon chains, while a peripheral stalk is formed by the delta and b chains.

The protein resides in the cell inner membrane. The catalysed reaction is ATP + H2O + 4 H(+)(in) = ADP + phosphate + 5 H(+)(out). Functionally, produces ATP from ADP in the presence of a proton gradient across the membrane. The alpha chain is a regulatory subunit. In Parvibaculum lavamentivorans (strain DS-1 / DSM 13023 / NCIMB 13966), this protein is ATP synthase subunit alpha.